We begin with the raw amino-acid sequence, 562 residues long: Nicotinate phosphoribosyltransferase (562 aa).

Positions 36, 183, and 225 each coordinate nicotinate. A Phosphohistidine modification is found at histidine 228. Threonine 397 lines the 5-phospho-alpha-D-ribose 1-diphosphate pocket.

It belongs to the NAPRTase family. It depends on Mg(2+) as a cofactor. Requires Mn(2+) as cofactor. Post-translationally, transiently phosphorylated on a His residue during the reaction cycle. Phosphorylation strongly increases the affinity for substrates and increases the rate of nicotinate D-ribonucleotide production. Dephosphorylation regenerates the low-affinity form of the enzyme, leading to product release.

It carries out the reaction nicotinate + 5-phospho-alpha-D-ribose 1-diphosphate + ATP + H2O = nicotinate beta-D-ribonucleotide + ADP + phosphate + diphosphate. It functions in the pathway cofactor biosynthesis; NAD(+) biosynthesis; nicotinate D-ribonucleotide from nicotinate: step 1/1. Catalyzes the first step in the biosynthesis of NAD from nicotinic acid, the ATP-dependent synthesis of beta-nicotinate D-ribonucleotide from nicotinate and 5-phospho-D-ribose 1-phosphate. Helps prevent cellular oxidative stress via its role in NAD biosynthesis. This Caenorhabditis elegans protein is Nicotinate phosphoribosyltransferase.